The chain runs to 270 residues: NAD(P)H-hydrate epimerase (270 aa).

The region spanning 25–234 is the YjeF N-terminal domain; that stretch reads FQQLMDLMQN…DLLAPEAIYQ (210 aa). Residue 73-77 coordinates (6S)-NADPHX; it reads DNGGQ. K(+)-binding residues include N74 and D144. (6S)-NADPHX contacts are provided by residues 148–154 and E177; that span reads GVGLYGH. Position 180 (T180) interacts with K(+).

Belongs to the NnrE/AIBP family. The cofactor is K(+).

It catalyses the reaction (6R)-NADHX = (6S)-NADHX. The catalysed reaction is (6R)-NADPHX = (6S)-NADPHX. Catalyzes the epimerization of the S- and R-forms of NAD(P)HX, a damaged form of NAD(P)H that is a result of enzymatic or heat-dependent hydration. This is a prerequisite for the S-specific NAD(P)H-hydrate dehydratase to allow the repair of both epimers of NAD(P)HX. The protein is NAD(P)H-hydrate epimerase of Legionella pneumophila serogroup 1 (strain 2300/99 Alcoy).